Consider the following 81-residue polypeptide: Exodeoxyribonuclease 7 small subunit (81 aa).

The segment at 61-81 (MNDSDQEVAFETPQGGTGDAD) is disordered.

This sequence belongs to the XseB family. Heterooligomer composed of large and small subunits.

The protein localises to the cytoplasm. The catalysed reaction is Exonucleolytic cleavage in either 5'- to 3'- or 3'- to 5'-direction to yield nucleoside 5'-phosphates.. In terms of biological role, bidirectionally degrades single-stranded DNA into large acid-insoluble oligonucleotides, which are then degraded further into small acid-soluble oligonucleotides. The protein is Exodeoxyribonuclease 7 small subunit of Levilactobacillus brevis (strain ATCC 367 / BCRC 12310 / CIP 105137 / JCM 1170 / LMG 11437 / NCIMB 947 / NCTC 947) (Lactobacillus brevis).